The primary structure comprises 529 residues: Cytokinin dehydrogenase 4 (529 aa).

The first 27 residues, 1–27, serve as a signal peptide directing secretion; it reads MRGAMKPSIVHCLKLLMLLALGGVTMH. Residues 63–244 enclose the FAD-binding PCMH-type domain; that stretch reads CSLLPAAVLH…TRARIALEPA (182 aa). FAD contacts are provided by alanine 99, glycine 101, and glycine 103. Histidine 104 carries the post-translational modification Pros-8alpha-FAD histidine. Positions 105, 109, 168, 173, 179, 183, and 234 each coordinate FAD. Residues asparagine 285, asparagine 419, and asparagine 425 are each glycosylated (N-linked (GlcNAc...) asparagine). Residues tyrosine 479 and glutamine 517 each coordinate FAD.

The protein belongs to the oxygen-dependent FAD-linked oxidoreductase family. As to quaternary structure, monomer. It depends on FAD as a cofactor. Expressed in inflorescence meristems.

Its subcellular location is the secreted. The protein resides in the extracellular space. It catalyses the reaction N(6)-dimethylallyladenine + A + H2O = 3-methyl-2-butenal + adenine + AH2. Functionally, catalyzes the oxidation of cytokinins, a family of N(6)-substituted adenine derivatives that are plant hormones, where the substituent is an isopentenyl group. In Oryza sativa subsp. japonica (Rice), this protein is Cytokinin dehydrogenase 4 (CKX4).